We begin with the raw amino-acid sequence, 284 residues long: D-tagatose-1,6-bisphosphate aldolase subunit GatY (284 aa).

Catalysis depends on Asp82, which acts as the Proton donor. The Zn(2+) site is built by His83 and His180. Position 181 (Gly181) interacts with dihydroxyacetone phosphate. His208 is a Zn(2+) binding site. Dihydroxyacetone phosphate is bound by residues 209 to 211 (GAS) and 230 to 233 (NVAT).

This sequence belongs to the class II fructose-bisphosphate aldolase family. TagBP aldolase GatY subfamily. As to quaternary structure, forms a complex with GatZ. Zn(2+) serves as cofactor.

It carries out the reaction D-tagatofuranose 1,6-bisphosphate = D-glyceraldehyde 3-phosphate + dihydroxyacetone phosphate. The protein operates within carbohydrate metabolism; D-tagatose 6-phosphate degradation; D-glyceraldehyde 3-phosphate and glycerone phosphate from D-tagatose 6-phosphate: step 2/2. Functionally, catalytic subunit of the tagatose-1,6-bisphosphate aldolase GatYZ, which catalyzes the reversible aldol condensation of dihydroxyacetone phosphate (DHAP or glycerone-phosphate) with glyceraldehyde 3-phosphate (G3P) to produce tagatose 1,6-bisphosphate (TBP). Requires GatZ subunit for full activity and stability. Is involved in the catabolism of galactitol. The chain is D-tagatose-1,6-bisphosphate aldolase subunit GatY from Escherichia coli O17:K52:H18 (strain UMN026 / ExPEC).